The chain runs to 537 residues: T-complex protein 1 subunit theta (537 aa).

It belongs to the TCP-1 chaperonin family. As to quaternary structure, heterooligomeric complex.

Its subcellular location is the cytoplasm. In terms of biological role, molecular chaperone; assists the folding of proteins upon ATP hydrolysis. Known to play a role, in vitro, in the folding of actin and tubulin. In Dictyostelium discoideum (Social amoeba), this protein is T-complex protein 1 subunit theta (cct8).